The chain runs to 459 residues: MSEINVMERTRELVVNPLVTCQPFGAMFATLGIRRGLPIVHGSQGCSTFVRYGLNRHFREPAEIAVTSLHEDAAVFGGRSNLIDGVKNLVKRFRPELVGIVTTCSSEITGDDVDGFLRVAEAELREELGERFRTRMVSISTPSFVEHHLRGYGNALKSFIDTLAVDEGDCNERINLIPGIVNPGDIREIRHIFELMDVDPIILTDTSDPFDSPLRPSKTEKMPFYPKGGTVVSDIEESSNSIGTLSMSMYGNEASETLKKRFNIPKEHHIPIGVRNTDDFVRSLARIAEVDVSEELLDERGILIDSMADISSRYLFGRTAAVYGDPDMVMGVSRFLCELGITPLYACVGVDNEIFREGMKRVASEADERINVMINSDLRALERELTEEPVDFMIGNSDGRLIARDLGIPLVRMGFPVYDRVGYHRIPVVGYRGSVNLLNRITNTVLREYYEPQHWKLQQ.

Residues C21, C46, C104, and S143 each coordinate [8Fe-7S] cluster.

Belongs to the NifD/NifK/NifE/NifN family. In terms of assembly, tetramer of two alpha and two beta chains. Forms complex with the iron protein (nitrogenase component 2). The cofactor is [8Fe-7S] cluster.

The catalysed reaction is N2 + 8 reduced [2Fe-2S]-[ferredoxin] + 16 ATP + 16 H2O = H2 + 8 oxidized [2Fe-2S]-[ferredoxin] + 2 NH4(+) + 16 ADP + 16 phosphate + 6 H(+). This molybdenum-iron protein is part of the nitrogenase complex that catalyzes the key enzymatic reactions in nitrogen fixation. In Methanothermobacter thermautotrophicus (strain ATCC 29096 / DSM 1053 / JCM 10044 / NBRC 100330 / Delta H) (Methanobacterium thermoautotrophicum), this protein is Nitrogenase molybdenum-iron protein beta chain (nifK).